Here is a 428-residue protein sequence, read N- to C-terminus: C4-dicarboxylate transport protein (428 aa).

8 consecutive transmembrane segments (helical) span residues 8-28 (SLYFQVLTAIAIGILLGHFYP), 44-64 (LIKMIIAPVIFCTVVTGIAGM), 76-96 (VALLYFEIVSTIALIIGLIIV), 142-162 (IGAFASGNILQVLLFAVLFGF), 184-204 (VIFGIINMIMRLAPIGAFGAM), 222-242 (LIICFYITCILFVVLVLGSIA), 326-346 (IVHQITLLIVLLLSSKGAAGV), and 352-372 (IVLAATLSAVGHLPVAGLALI).

It belongs to the dicarboxylate/amino acid:cation symporter (DAACS) (TC 2.A.23) family.

The protein resides in the cell inner membrane. Responsible for the transport of dicarboxylates such as succinate, fumarate, and malate from the periplasm across the membrane. The protein is C4-dicarboxylate transport protein of Escherichia coli O139:H28 (strain E24377A / ETEC).